We begin with the raw amino-acid sequence, 115 residues long: Large ribosomal subunit protein bL19 (115 aa).

The protein belongs to the bacterial ribosomal protein bL19 family.

Functionally, this protein is located at the 30S-50S ribosomal subunit interface and may play a role in the structure and function of the aminoacyl-tRNA binding site. The chain is Large ribosomal subunit protein bL19 from Streptococcus pyogenes serotype M1.